A 90-amino-acid chain; its full sequence is Protein RL8A (90 aa).

A helical membrane pass occupies residues 15–34 (WTCEGLLLLLGLLVLFFHHH). A disordered region spans residues 55–90 (HESGWYSSDDDGDRDGDEETGESHNRNSVGLSAVFS). Residues 62 to 74 (SDDDGDRDGDEET) are compositionally biased toward acidic residues. Residues 80-90 (RNSVGLSAVFS) are compositionally biased toward polar residues.

Its subcellular location is the host membrane. This chain is Protein RL8A (RL8A), found in Homo sapiens (Human).